The chain runs to 48 residues: Fimbrial assembly protein, serogroup A1 (48 aa).

The polypeptide is Fimbrial assembly protein, serogroup A1 (fimB) (Dichelobacter nodosus (Bacteroides nodosus)).